The chain runs to 320 residues: Glycerol-3-phosphate dehydrogenase [NAD(P)+] (320 aa).

Positions 11, 30, and 102 each coordinate NADPH. 3 residues coordinate sn-glycerol 3-phosphate: lysine 102, glycine 130, and serine 132. NADPH is bound at residue alanine 134. 5 residues coordinate sn-glycerol 3-phosphate: lysine 185, aspartate 238, serine 248, arginine 249, and asparagine 250. Lysine 185 acts as the Proton acceptor in catalysis. Arginine 249 serves as a coordination point for NADPH. Residue glutamate 270 participates in NADPH binding.

Belongs to the NAD-dependent glycerol-3-phosphate dehydrogenase family.

The protein localises to the cytoplasm. The catalysed reaction is sn-glycerol 3-phosphate + NAD(+) = dihydroxyacetone phosphate + NADH + H(+). The enzyme catalyses sn-glycerol 3-phosphate + NADP(+) = dihydroxyacetone phosphate + NADPH + H(+). Its pathway is membrane lipid metabolism; glycerophospholipid metabolism. In terms of biological role, catalyzes the reduction of the glycolytic intermediate dihydroxyacetone phosphate (DHAP) to sn-glycerol 3-phosphate (G3P), the key precursor for phospholipid synthesis. This is Glycerol-3-phosphate dehydrogenase [NAD(P)+] from Roseobacter denitrificans (strain ATCC 33942 / OCh 114) (Erythrobacter sp. (strain OCh 114)).